Reading from the N-terminus, the 196-residue chain is Gastrula zinc finger protein XlCGF8.2DB (196 aa).

7 C2H2-type zinc fingers span residues 6-28 (FTCK…MTIH), 34-56 (FSCT…LTIH), 62-84 (FPCT…MKIH), 90-112 (FTCT…LKIH), 118-140 (FSCT…MKIH), 146-168 (FTCT…LKMH), and 174-196 (FTCT…MKIH).

Belongs to the krueppel C2H2-type zinc-finger protein family.

The protein localises to the nucleus. Functionally, may be involved in transcriptional regulation. The chain is Gastrula zinc finger protein XlCGF8.2DB from Xenopus laevis (African clawed frog).